Here is a 249-residue protein sequence, read N- to C-terminus: Probable transcriptional regulatory protein OTBS_0251 (249 aa).

This sequence belongs to the TACO1 family.

It is found in the cytoplasm. The sequence is that of Probable transcriptional regulatory protein OTBS_0251 from Orientia tsutsugamushi (strain Boryong) (Rickettsia tsutsugamushi).